The sequence spans 220 residues: Putative cobalt transport protein CbiM (220 aa).

6 helical membrane-spanning segments follow: residues 6–26 (GFLP…VISY), 45–65 (IAVA…SVTG), 74–94 (GIAV…IVLL), 107–127 (TLGA…WVVF), 153–173 (LVTS…AGVV), and 188–208 (IPIG…IAMS).

The protein belongs to the CbiM family. As to quaternary structure, forms an energy-coupling factor (ECF) transporter complex composed of an ATP-binding protein (A component, CbiO), a transmembrane protein (T component, CbiQ) and 2 possible substrate-capture proteins (S components, CbiM and CbiN) of unknown stoichimetry.

The protein localises to the cell membrane. It participates in cofactor biosynthesis; adenosylcobalamin biosynthesis. Part of the energy-coupling factor (ECF) transporter complex CbiMNOQ involved in cobalt import. The chain is Putative cobalt transport protein CbiM from Halobacterium salinarum (strain ATCC 29341 / DSM 671 / R1).